We begin with the raw amino-acid sequence, 75 residues long: DNA-directed RNA polymerase subunit omega (75 aa).

Belongs to the RNA polymerase subunit omega family. In terms of assembly, in cyanobacteria the RNAP catalytic core is composed of 2 alpha, 1 beta, 1 beta', 1 gamma and 1 omega subunit. When a sigma factor is associated with the core the holoenzyme is formed, which can initiate transcription.

The enzyme catalyses RNA(n) + a ribonucleoside 5'-triphosphate = RNA(n+1) + diphosphate. Promotes RNA polymerase assembly. Latches the N- and C-terminal regions of the beta' subunit thereby facilitating its interaction with the beta and alpha subunits. This Picosynechococcus sp. (strain ATCC 27264 / PCC 7002 / PR-6) (Agmenellum quadruplicatum) protein is DNA-directed RNA polymerase subunit omega.